A 312-amino-acid polypeptide reads, in one-letter code: Cathepsin O (312 aa).

The signal sequence occupies residues 1-23 (MKPQLVNLLLLCCCCLGRHGVAG). Residues 24 to 98 (TWSWSHQREA…EGQRPIPNVS (75 aa)) constitute a propeptide, activation peptide. Residues Asn53 and Asn96 are each glycosylated (N-linked (GlcNAc...) asparagine). Disulfide bonds link Cys120/Cys161, Cys154/Cys195, and Cys253/Cys301. Residue Cys123 is part of the active site. Residues His260 and Asn280 contribute to the active site.

The protein belongs to the peptidase C1 family.

It is found in the lysosome. The enzyme catalyses The recombinant human enzyme hydrolyzes synthetic endopeptidase substrates including Z-Phe-Arg-NHMec and Z-Arg-Arg-NHMec.. Its function is as follows. Proteolytic enzyme possibly involved in normal cellular protein degradation and turnover. The polypeptide is Cathepsin O (Ctso) (Mus musculus (Mouse)).